The sequence spans 174 residues: Endoribonuclease YbeY (174 aa).

Residues His-129, His-133, and His-139 each contribute to the Zn(2+) site.

Belongs to the endoribonuclease YbeY family. Requires Zn(2+) as cofactor.

The protein localises to the cytoplasm. Single strand-specific metallo-endoribonuclease involved in late-stage 70S ribosome quality control and in maturation of the 3' terminus of the 16S rRNA. This is Endoribonuclease YbeY from Lactobacillus helveticus (strain DPC 4571).